The following is a 137-amino-acid chain: Protein MGF 110-7L (137 aa).

An N-terminal signal peptide occupies residues 1–20 (MLVIILGVIGLLASSNLVSS). N-linked (GlcNAc...) asparagine; by host glycans are attached at residues Asn69, Asn70, and Asn105.

Belongs to the asfaviruses V110 family.

This chain is Protein MGF 110-7L, found in Ornithodoros (relapsing fever ticks).